The primary structure comprises 88 residues: Putative septation protein SpoVG (88 aa).

It belongs to the SpoVG family.

Could be involved in septation. The polypeptide is Putative septation protein SpoVG (Lachnospira eligens (strain ATCC 27750 / DSM 3376 / VPI C15-48 / C15-B4) (Eubacterium eligens)).